A 315-amino-acid chain; its full sequence is MPKKIILDCDPGLDDAVAILLAHGNPEIELLAITTVVGNQTLAKVTRNAQLVADIAGITGVPIAAGCDKPLVRKIMTAGHIHGESGMGTVAYPAEFKNKVDERHAVNLIIDLVMSHEPKTITLVPTGGLTNIAMAARLEPRIVDRVKEVVLMGGGYHEGNATSVAEFNIIIDPEAAHIVFNESWQVTMVGLDLTHQALATPPILQRVKEVDTNPARFMLEIMDYYTKIYQSNRYMAAAAVHDPCAVAYVIDPSVMTTERVPVDIELTGKLTLGMTVADFRNPRPEHCHTQVAVKLDFEKFWGLVLDALERIGDPQ.

Residue D10 participates in Ca(2+) binding. D14 lines the substrate pocket. 2 residues coordinate Ca(2+): D15 and T126. Residues N160, E166, and N168 each coordinate substrate. The Proton donor role is filled by H241. D242 is a binding site for Ca(2+).

As to quaternary structure, homotetramer. Ca(2+) serves as cofactor.

The enzyme catalyses inosine + H2O = hypoxanthine + D-ribose. It catalyses the reaction uridine + H2O = D-ribose + uracil. The protein operates within purine metabolism; purine nucleoside salvage. In terms of biological role, catalyzes the hydrolysis of the N-glycosidic bond of commonly occurring purine and pyrimidine nucleosides into ribose and the base, but has a preference for inosine and uridine as substrates. Is not active on thymidine and 2'-deoxynucleosides. Functions in purine salvage from the blood of the host, a fundamental pathway since protozoan parasites such as C.fasciculata are incapable of de novo purine biosynthesis. This chain is Inosine-uridine preferring nucleoside hydrolase (IUNH), found in Crithidia fasciculata.